The sequence spans 126 residues: S-adenosylmethionine decarboxylase proenzyme (126 aa).

Residue serine 63 is the Schiff-base intermediate with substrate; via pyruvic acid of the active site. Serine 63 is subject to Pyruvic acid (Ser); by autocatalysis. The Proton acceptor; for processing activity role is filled by histidine 68. Residue cysteine 83 is the Proton donor; for catalytic activity of the active site.

Belongs to the prokaryotic AdoMetDC family. Type 1 subfamily. Heterotetramer of two alpha and two beta chains arranged as a dimer of alpha/beta heterodimers. Requires pyruvate as cofactor. Is synthesized initially as an inactive proenzyme. Formation of the active enzyme involves a self-maturation process in which the active site pyruvoyl group is generated from an internal serine residue via an autocatalytic post-translational modification. Two non-identical subunits are generated from the proenzyme in this reaction, and the pyruvate is formed at the N-terminus of the alpha chain, which is derived from the carboxyl end of the proenzyme. The post-translation cleavage follows an unusual pathway, termed non-hydrolytic serinolysis, in which the side chain hydroxyl group of the serine supplies its oxygen atom to form the C-terminus of the beta chain, while the remainder of the serine residue undergoes an oxidative deamination to produce ammonia and the pyruvoyl group blocking the N-terminus of the alpha chain.

It carries out the reaction S-adenosyl-L-methionine + H(+) = S-adenosyl 3-(methylsulfanyl)propylamine + CO2. It functions in the pathway amine and polyamine biosynthesis; S-adenosylmethioninamine biosynthesis; S-adenosylmethioninamine from S-adenosyl-L-methionine: step 1/1. Its function is as follows. Catalyzes the decarboxylation of S-adenosylmethionine to S-adenosylmethioninamine (dcAdoMet), the propylamine donor required for the synthesis of the polyamines spermine and spermidine from the diamine putrescine. This chain is S-adenosylmethionine decarboxylase proenzyme, found in Clostridium kluyveri (strain NBRC 12016).